The following is a 1737-amino-acid chain: Complement C4 (1737 aa).

The first 19 residues, 1-19 (MRLLWGLAWAFSFFASSLQ), serve as a signal peptide directing secretion. Cysteine 66 and cysteine 95 are disulfide-bonded. Asparagine 224 and asparagine 664 each carry an N-linked (GlcNAc...) asparagine glycan. Cysteine 633 and cysteine 667 are oxidised to a cystine. A propeptide spanning residues 674–677 (RQKR) is cleaved from the precursor. 3 cysteine pairs are disulfide-bonded: cysteine 700/cysteine 726, cysteine 701/cysteine 733, and cysteine 714/cysteine 734. The Anaphylatoxin-like domain occupies 700–734 (CCQDGMTKLPMARTCEQRAARVPQPACREPFLSCC). Residue asparagine 743 is glycosylated (N-linked (GlcNAc...) asparagine). The isoglutamyl cysteine thioester (Cys-Gln) cross-link spans 1005–1008 (CAEQ). N-linked (GlcNAc...) asparagine glycosylation is found at asparagine 1323 and asparagine 1386. Sulfotyrosine is present on residues tyrosine 1412, tyrosine 1414, and tyrosine 1416. Positions 1443 to 1446 (RRRR) are excised as a propeptide. 5 disulfide bridges follow: cysteine 1464–cysteine 1528, cysteine 1576–cysteine 1581, cysteine 1588–cysteine 1666, cysteine 1611–cysteine 1735, and cysteine 1711–cysteine 1720. The NTR domain maps to 1588–1735 (CPRQRRSLER…FLQEYSSQGC (148 aa)). Tyrosine 1676 is subject to Sulfotyrosine.

In terms of assembly, in absence of complement activation, circulates in blood as a disulfide-linked trimer of an alpha, beta and gamma chain. As to quaternary structure, complement C4b is composed of complement C4b-A, complement C4 beta and complement C4 gamma chains that are associated via disulfide bonds. Non-enzymatic component of the C3 convertase, also named C4bC2b, composed of the serine protease complement C2b (C2), as well as complement C4b. Non-enzymatic component of the C5 convertase, also named C4bC2bC3b, composed of the serine protease complement C2b (C2), complement C3b, as well as complement C4b. Prior to secretion, the single-chain precursor is enzymatically cleaved by plasminogen (PLG) to yield non-identical chains alpha, beta and gamma. During activation of the complement systems, the alpha chain is cleaved into C4a and C4b by different proteases depending on the complement pathway: C4b stays linked to the beta and gamma chains, while C4a is released in the plasma. The alpha chain is cleaved by C1S to generate C4a and C4b following activation by the classical complement system. The alpha chain is cleaved to generate C4a and C4b by MASP2 following activation by the lectin complement system. The alpha chain is cleaved by GZMK to generate C4a and C4b following activation by the GZMK complement system. Further degradation of C4b by C1 into the inactive fragments C4c and C4d blocks the generation of C3 convertase. The proteolytic cleavages often are incomplete so that many structural forms can be found in plasma. Post-translationally, upon activation, the internal thioester bond reacts with carbohydrate antigens on the target surface to form amide or ester bonds, leading to covalent association with the surface of pathogens. In terms of processing, complement C4b interacts with complement C3b via a thioester linkage. N- and O-glycosylated. O-glycosylated with a core 1 or possibly core 8 glycan.

The protein resides in the secreted. It is found in the cell surface. Precursor of non-enzymatic components of the classical, lectin and GZMK complement pathways, which consist in a cascade of proteins that leads to phagocytosis and breakdown of pathogens and signaling that strengthens the adaptive immune system. Functionally, non-enzymatic component of C3 and C5 convertases. Generated following cleavage by complement proteases (C1S, MASP2 or GZMK, depending on the complement pathway), it covalently attaches to the surface of pathogens, where it acts as an opsonin that marks the surface of antigens for removal. It then recruits the serine protease complement C2b to form the C3 and C5 convertases, which cleave and activate C3 and C5, respectively, the next components of the complement pathways. Complement C4b-A isotype is responsible for effective binding to form amide bonds with immune aggregates or protein antigens, while complement C4b-B isotype catalyzes the transacylation of the thioester carbonyl group to form ester bonds with carbohydrate antigens. In terms of biological role, putative humoral mediator released following cleavage by complement proteases (C1S, MASP2 or GZMK, depending on the complement pathway). While it is strongly similar to anaphylatoxins, its role is unclear. Was reported to act as a mediator of local inflammatory process; however these effects were probably due to contamination with C3a and/C5a anaphylatoxins in biological assays. This Rattus norvegicus (Rat) protein is Complement C4.